Consider the following 864-residue polypeptide: Leucine--tRNA ligase (864 aa).

Positions 42 to 52 match the 'HIGH' region motif; it reads PYPSGKLHMGH. A 'KMSKS' region motif is present at residues 624 to 628; it reads KMSKS. Lysine 627 lines the ATP pocket.

The protein belongs to the class-I aminoacyl-tRNA synthetase family.

The protein localises to the cytoplasm. It catalyses the reaction tRNA(Leu) + L-leucine + ATP = L-leucyl-tRNA(Leu) + AMP + diphosphate. In Burkholderia ambifaria (strain MC40-6), this protein is Leucine--tRNA ligase.